We begin with the raw amino-acid sequence, 307 residues long: Streptomycin 6-kinase (307 aa).

Residue 133 to 145 (LAGLLNRLHSVPA) participates in streptomycin binding. The active-site Proton acceptor is the aspartate 201.

Belongs to the aminoglycoside phosphotransferase family.

The enzyme catalyses streptomycin + ATP = streptomycin 6-phosphate + ADP + H(+). In terms of biological role, the aminoglycoside phosphotransferases achieve inactivation of their antibiotic substrates by phosphorylation. This chain is Streptomycin 6-kinase (aphD), found in Streptomyces griseus.